The chain runs to 371 residues: Probable G protein-coupled receptor 85 (371 aa).

Residues 1 to 26 (MANYSHAGDHNILQNVSPLATFLKLT) are Extracellular-facing. Asn3 carries an N-linked (GlcNAc...) asparagine glycan. A helical membrane pass occupies residues 27-47 (SLGFIIGVGVVGNLLISILLV). Residues 48–58 (KDKSLHRAPYY) are Cytoplasmic-facing. A helical membrane pass occupies residues 59–79 (FLLDLCASDILRSAICFPFVF). Over 80-96 (TSVKNGSAWTYGTLTCK) the chain is Extracellular. Asn84 carries N-linked (GlcNAc...) asparagine glycosylation. Cys95 and Cys173 form a disulfide bridge. A helical transmembrane segment spans residues 97-117 (VIAFLGVLSCFHTAFMLFCVS). The Cytoplasmic segment spans residues 118 to 138 (VTRYLAIAHHRFYTKRLTFWT). Residues 139–159 (CLAVICMVWTLSVAMAFPPVL) form a helical membrane-spanning segment. The Extracellular portion of the chain corresponds to 160–189 (DVGTYSFIREEDQCTFQHRSFRANDSLGFM). Asn183 carries an N-linked (GlcNAc...) asparagine glycan. The chain crosses the membrane as a helical span at residues 190 to 210 (LLLALILLATQLVYLKLIFFV). Residues 211 to 287 (HDRRKMKPVQ…FKTEKRISRM (77 aa)) are Cytoplasmic-facing. Residues 288 to 308 (FYIITFFFLSLWGPYLVACYW) traverse the membrane as a helical segment. The Extracellular portion of the chain corresponds to 309-321 (RVFARGPVIPGGY). A helical membrane pass occupies residues 322–342 (LTAAVWMSFAQAGVNPFICIF). Residues 343–371 (SNRELRRCFSTTLLYCRKSRLPREPYCVI) are Cytoplasmic-facing.

The protein belongs to the G-protein coupled receptor 1 family.

It is found in the cell membrane. In terms of biological role, orphan receptor. This is Probable G protein-coupled receptor 85 (gpr85) from Danio rerio (Zebrafish).